The chain runs to 269 residues: Growth-regulating factor 11 (269 aa).

The span at 1 to 11 (MAAEGEAKKDS) shows a compositional bias: basic and acidic residues. Residues 1-71 (MAAEGEAKKD…GKEDVEEGGV (71 aa)) form a disordered region. Over residues 43–52 (GEAGGGGGGG) the composition is skewed to gly residues. Residues 58–68 (EEEEGKEDVEE) show a composition bias toward acidic residues. Residues 114–149 (AFTAMQLQELEQQSRVYQYMAARVPVPTHLVFPIWK) enclose the QLQ domain. In terms of domain architecture, WRC spans 180 to 224 (EPEPGRCRRTDGKKWRCWRNAIANEKYCERHMHRGRKRPVQLVVE). 2 short sequence motifs (bipartite nuclear localization signal) span residues 185 to 195 (RCRRTDGKKWR) and 213 to 217 (RGRKR). A disordered region spans residues 212–269 (HRGRKRPVQLVVEDDEPDSTSGSKPASGKATEGGKKTDDKSSSSKKLAVAAPAAVEST). Over residues 243–253 (EGGKKTDDKSS) the composition is skewed to basic and acidic residues. A compositionally biased stretch (low complexity) spans 255–269 (SKKLAVAAPAAVEST).

It belongs to the GRF family.

The protein localises to the nucleus. In terms of biological role, transcription activator that plays a regulatory role in gibberellin-induced stem elongation. This is Growth-regulating factor 11 (GRF11) from Oryza sativa subsp. japonica (Rice).